The sequence spans 346 residues: N-acetyl-gamma-glutamyl-phosphate reductase (346 aa).

The active site involves cysteine 150.

The protein belongs to the NAGSA dehydrogenase family. Type 1 subfamily.

The protein resides in the cytoplasm. The catalysed reaction is N-acetyl-L-glutamate 5-semialdehyde + phosphate + NADP(+) = N-acetyl-L-glutamyl 5-phosphate + NADPH + H(+). It functions in the pathway amino-acid biosynthesis; L-arginine biosynthesis; N(2)-acetyl-L-ornithine from L-glutamate: step 3/4. Functionally, catalyzes the NADPH-dependent reduction of N-acetyl-5-glutamyl phosphate to yield N-acetyl-L-glutamate 5-semialdehyde. This Brevibacillus brevis (strain 47 / JCM 6285 / NBRC 100599) protein is N-acetyl-gamma-glutamyl-phosphate reductase.